The primary structure comprises 234 residues: Ribonuclease Trv (234 aa).

5 cysteine pairs are disulfide-bonded: Cys-5/Cys-24, Cys-13/Cys-59, Cys-23/Cys-125, Cys-67/Cys-117, and Cys-189/Cys-224. N-linked (GlcNAc...) asparagine glycosylation occurs at Asn-15. Residue His-52 is part of the active site. The N-linked (GlcNAc...) asparagine glycan is linked to Asn-75. Catalysis depends on residues Glu-110 and His-114.

It belongs to the RNase T2 family.

The enzyme catalyses a ribonucleotidyl-ribonucleotide-RNA + H2O = a 3'-end 3'-phospho-ribonucleotide-RNA + a 5'-end dephospho-ribonucleoside-RNA + H(+). This is a base non-specific and adenylic acid preferential ribonuclease. The sequence is that of Ribonuclease Trv from Hypocrea rufa (Trichoderma viride).